The chain runs to 518 residues: MDRAPQRQHQASRELLAAKKTHTSQIEVIPCKICGDKSSGIHYGVITCEGCKGFFRRSQRCNAAYSCTRQQNCPIDRTSRNRCQHCRLQKCLALGMSRDAVKFGRMSKKQRDSLHAEVQKQLQQRQQQQQEPVVKTPPAGAQGADTLTYTLGLPDGQLPLGSSPDLPEASACPPGLLKASGSGPSYSNNLAKAGLNGASCHLEYSPERGKAEGRESFYSTGSQLTPDRCGLRFEEHRHPGLGELGQGPDSYGSPSFRSTPEAPYASLTEIEHLVQSVCKSYRETCQLRLEDLLRQRSNIFSREEVTGYQRKSMWEMWERCAHHLTEAIQYVVEFAKRLSGFMELCQNDQIVLLKAGAVEVVLVRMCRAYNADNRTVFFEGKYGGMELFRALGCSELISSIFDFSHSLSALHFSEDEIALYTALVLINAYRPGLQEKRKVEQLQYNLELAFHHHLCKTHRQSILAKLPPKGKLRSLCSQHVERLQIFQHLHPIVVQATFPPLYKELFSTETESPVGLSK.

Residues M1–P30 are modulating. 2 consecutive NR C4-type zinc fingers follow at residues C31 to C51 and C67 to C91. Positions C31–M96 form a DNA-binding region, nuclear receptor. Disordered stretches follow at residues R105–G183 and H238–S258. A compositionally biased stretch (basic and acidic residues) spans K109–V118. A compositionally biased stretch (low complexity) spans Q119–Q130. The NR LBD domain maps to E269–T508. Residues L501–F506 carry the AF-2 motif.

Belongs to the nuclear hormone receptor family. NR1 subfamily. In terms of assembly, interacts (via AF-2 motif) with the coactivators NCOA1, NCOA2 and PPARGC1A (via LXXLL motif). Interacts with the corepressor NCOR1. Interacts with CRY1. Interacts (via AF-2 motif) with PROX1. Interacts with FOXP3. Interacts with NR0B2.

It localises to the nucleus. Its function is as follows. Nuclear receptor that binds DNA as a monomer to ROR response elements (RORE) containing a single core motif half-site 5'-AGGTCA-3' preceded by a short A-T-rich sequence. Key regulator of cellular differentiation, immunity, peripheral circadian rhythm as well as lipid, steroid, xenobiotics and glucose metabolism. Considered to have intrinsic transcriptional activity, have some natural ligands like oxysterols that act as agonists (25-hydroxycholesterol) or inverse agonists (7-oxygenated sterols), enhancing or repressing the transcriptional activity, respectively. Recruits distinct combinations of cofactors to target gene regulatory regions to modulate their transcriptional expression, depending on the tissue, time and promoter contexts. Regulates the circadian expression of clock genes such as CRY1, BMAL1 and NR1D1 in peripheral tissues and in a tissue-selective manner. Competes with NR1D1 for binding to their shared DNA response element on some clock genes such as BMAL1, CRY1 and NR1D1 itself, resulting in NR1D1-mediated repression or RORC-mediated activation of the expression, leading to the circadian pattern of clock genes expression. Therefore influences the period length and stability of the clock. Involved in the regulation of the rhythmic expression of genes involved in glucose and lipid metabolism, including PLIN2 and AVPR1A. Negative regulator of adipocyte differentiation through the regulation of early phase genes expression, such as MMP3. Controls adipogenesis as well as adipocyte size and modulates insulin sensitivity in obesity. In liver, has specific and redundant functions with RORA as positive or negative modulator of expression of genes encoding phase I and Phase II proteins involved in the metabolism of lipids, steroids and xenobiotics, such as SULT1E1. Also plays a role in the regulation of hepatocyte glucose metabolism through the regulation of G6PC1 and PCK1. Essential for thymopoiesis and the development of several secondary lymphoid tissues, including lymph nodes and Peyer's patches. Required for the generation of LTi (lymphoid tissue inducer) cells. Regulates thymocyte survival through DNA-binding on ROREs of target gene promoter regions and recruitment of coactivaros via the AF-2. Also plays a key role, downstream of IL6 and TGFB and synergistically with RORA, for lineage specification of uncommitted CD4(+) T-helper (T(H)) cells into T(H)17 cells, antagonizing the T(H)1 program. Probably regulates IL17 and IL17F expression on T(H) by binding to the essential enhancer conserved non-coding sequence 2 (CNS2) in the IL17-IL17F locus. May also play a role in the pre-TCR activation cascade leading to the maturation of alpha/beta T-cells and may participate in the regulation of DNA accessibility in the TCR-J(alpha) locus. Regulates the rhythmic expression of PROX1 and promotes its nuclear localization. Plays an indispensable role in the induction of IFN-gamma dependent anti-mycobacterial systemic immunity. This is Nuclear receptor ROR-gamma (RORC) from Pongo abelii (Sumatran orangutan).